A 95-amino-acid polypeptide reads, in one-letter code: Small ribosomal subunit protein bS6 (95 aa).

This sequence belongs to the bacterial ribosomal protein bS6 family.

Binds together with bS18 to 16S ribosomal RNA. This Streptococcus agalactiae serotype Ia (strain ATCC 27591 / A909 / CDC SS700) protein is Small ribosomal subunit protein bS6.